Reading from the N-terminus, the 375-residue chain is Coproporphyrin III ferrochelatase (375 aa).

Residues S59 and Y128 each contribute to the Fe-coproporphyrin III site. Fe(2+) contacts are provided by H191 and E286.

Belongs to the ferrochelatase family.

The protein resides in the cytoplasm. The catalysed reaction is Fe-coproporphyrin III + 2 H(+) = coproporphyrin III + Fe(2+). It functions in the pathway porphyrin-containing compound metabolism; protoheme biosynthesis. In terms of biological role, involved in coproporphyrin-dependent heme b biosynthesis. Catalyzes the insertion of ferrous iron into coproporphyrin III to form Fe-coproporphyrin III. The polypeptide is Coproporphyrin III ferrochelatase (Streptomyces griseus subsp. griseus (strain JCM 4626 / CBS 651.72 / NBRC 13350 / KCC S-0626 / ISP 5235)).